The primary structure comprises 1846 residues: MTYSELYSRYTRVWIPDPDEVWRSAELTKDYKDGDESLQLRLEDDTILDYPIDVQNNQVPFLRNPDILVGENDLTALSHLHEPAVLHNLKVRFLESNHIYTYCGIVLVAINPYEQLPIYGQDVIYAYSGQNMGDMDPHIFAVAEEAYKQMARDEKNQSIIVSGESGAGKTVSAKYAMRYFATVGGSASDTNIEEKVLASSPIMEAIGNAKTTRNDNSSRFGKYIEIGFDKKYHIIGANMRTYLLEKSRVVFQADDERNYHIFYQLCAAASLPEFKELALTCAEDFFYTAHGGNTTIEGVDDAEDFEKTRQALTLLGVRESHQISIFKIIASILHLGSVEIQAERDGDSCSISPQDEHLSNFCRLLGIEHSQMEHWLCHRKLVTTSETYVKTMSLQQVVNARNALAKHIYAQLFSWIVEHINKALQTSLKQHSFIGVLDIYGFETFEINSFEQFCINYANEKLQQQFNSHVFKLEQEEYMKEQIPWTLIDFYDNQPCIDLIEAKLGILDLLDEECKVPKGTDQNWAQKLYERHSNSQHFQKPRMSNTAFIVIHFADKVEYLSDGFLEKNRDTVYEEQINILKASKFPLVADLFRDDEDSVPATNTAKSRSSSKINVRSSRPLMKAPNKEHKKSVGYQFRTSLNLLMETLNATTPHYVRCIKPNDEKLPFHFDPKRAVQQLRACGVLETIRISAAGYPSRWTYHDFFNRYRVLMKKRELANTTDKKNICKSVLESLIKDPDKFQFGRTKIFFRAGQVAYLEKLRADKFREATIMIQKTVRGWLQRVKYRRLRAATLTLQRFCRGYLARRLTEHLRRTRAAIVFQKQYRMLKARRAYCRVRRAAVIIQSYTRGHVCTQKLPPVLTEHKATIIQKYARGWMARRHFQRQRDAAIVIQCAFRRLKARQALKALKIEARSAEHLKRLNVGMENKVVQLQRKIDDQNKEFKTLSEQLSAVTSTHAMEVEKLKKELARYQQNQEADPSLQLQEEVQSLRTELQKAHSERRVLEDAHNRENGELRKRVADLEHENALLKDEKEHLNHQILRQSKAESSQSSVEENLLIKKELEEERSRYQNLVKEYSQLEQRYENLRDEQQTPGHRKNPSNQSSLESDSNYPSISTSEIGDTEDALQQVEEIGIEKAAMDMTVFLKLQKRVRELEQERKKLQVQLEKEQQDSKKVQVEQQNNGLDVDQDADIAYNSLKRQELESENKKLKNDLNERWKAVADQAMQDNSTHSSPDSYSLLLNQLKLANEELEVRKEEVLILRTQIMNADQRRLSGKNMEPNINARTSWPNSEKHVDQEDAIEAYHGVCQTNSQTEDWGYLNEDGELGLAYQGLKQVARLLEAQLQAQNLKHEEEVEHLKAQVEAMKEEMDKQQQTFCQTLLLSPEAQVEFGVQQEISRLTNENLDFKELVEKLEKNEKKLKKQLKIYMKKVQDLEAAQALAQSDRRHHELTRQVTVQRKEKDFQGMLEYHKEDEALLIRNLVTDLKPQMLSGTVPCLPAYILYMCIRHADYTNDDLKVHSLLSSTINGIKKVLKKHNEDFEMTSFWLSNTCRLLHCLKQYSGDEGFMTQNTAKQNEHCLKNFDLTEYRQVLSDLSIQIYQQLIKIAEGLLQPMIVSAMLENESIQGLSGVRPTGYRKRSSSMVDGENSYCLEAIIRQMNFFHTVLCDQGLDPEIILQVFKQLFYMINAVTLNNLLLRKDACSWSTGMQLRYNISQLEEWLRGKNLQQSGAVQTMEPLIQAAQLLQLKKKTQEDAEAICSLCTSLSTQQIVKILNLYTPLNGFEERVTVSFIRTIQAQLQERSDPQQLLLDSKHMFPVLFPFNPSALTMDSIHIPACLNLEFLNEV.

The Myosin N-terminal SH3-like domain maps to 8-60 (SRYTRVWIPDPDEVWRSAELTKDYKDGDESLQLRLEDDTILDYPIDVQNNQVP). Residues 21-40 (VWRSAELTKDYKDGDESLQL) are requires for interaction with LIMA1. One can recognise a Myosin motor domain in the interval 69–763 (VGENDLTALS…QVAYLEKLRA (695 aa)). Residue 163 to 170 (GESGAGKT) participates in ATP binding. The segment at 599–629 (VPATNTAKSRSSSKINVRSSRPLMKAPNKEH) is disordered. Residues 607-619 (SRSSSKINVRSSR) are compositionally biased toward low complexity. The interval 641 to 663 (LNLLMETLNATTPHYVRCIKPND) is actin-binding. 6 consecutive IQ domains span residues 767–788 (REATIMIQKTVRGWLQRVKYRR), 789–813 (LRAATLTLQRFCRGYLARRLTEHLR), 814–837 (RTRAAIVFQKQYRMLKARRAYCRV), 838–861 (RRAAVIIQSYTRGHVCTQKLPPVL), 862–884 (TEHKATIIQKYARGWMARRHFQR), and 885–914 (QRDAAIVIQCAFRRLKARQALKALKIEARS). 2 coiled-coil regions span residues 915-1272 (AEHL…ADQR) and 1334-1450 (LKQV…RHHE). The tract at residues 1088–1122 (RDEQQTPGHRKNPSNQSSLESDSNYPSISTSEIGD) is disordered. Residues 1100–1120 (PSNQSSLESDSNYPSISTSEI) show a composition bias toward polar residues. Ser1444 is subject to Phosphoserine. Residues 1524–1801 (SSTINGIKKV…IRTIQAQLQE (278 aa)) form the Dilute domain.

This sequence belongs to the TRAFAC class myosin-kinesin ATPase superfamily. Myosin family. Component of the CART complex, at least composed of ACTN4, HGS/HRS, MYO5B and TRIM3. Interacts with RAB11FIP2. Interacts with RAB11A and RAB8A. Found in a complex with CFTR and RAB11A. Interacts with NPC1L1. Interacts with LIMA1.

Its subcellular location is the cytoplasm. Functionally, may be involved in vesicular trafficking via its association with the CART complex. The CART complex is necessary for efficient transferrin receptor recycling but not for EGFR degradation. Required in a complex with RAB11A and RAB11FIP2 for the transport of NPC1L1 to the plasma membrane. Together with RAB11A participates in CFTR trafficking to the plasma membrane and TF (transferrin) recycling in nonpolarized cells. Together with RAB11A and RAB8A participates in epithelial cell polarization. Together with RAB25 regulates transcytosis. Required for proper localization of bile salt export pump ABCB11 at the apical/canalicular plasma membrane of hepatocytes. This is Unconventional myosin-Vb (Myo5b) from Rattus norvegicus (Rat).